A 471-amino-acid chain; its full sequence is MFRGAWMWPGKDAAALTICCCCCCWAPRQSDKPCADSERAQRWRLSLASLLFFTVLLADHLWLCAGARPRARELSSAMRPPWGAGRERQPVPPRAVLPPPPPSPGEPSASSGTCGPRYSNLTKAAPAAGSGPVCNGVPEPTGLDAACTKLESLQRLFEPTTPAPPLRPPDSPSRAPEFPSAKKNLLKGHFRNFTLSFCDTYTVWDLLLGMDRPDSLDCSLDTLLGDLLAVVASPGSGTWEACSNCIEAYQRLDRHAQEKYDEFDLVLHKYLQAEEYSIRSCTKGCKAVYKAWLCSEYFSVTQQECQNWVPCKQYCLEVQTRCPFILPDNEEMVYGGLPGFICTGLMDTSPKRPETKCCDVQWVSCESEKKKFKDSEPPKTHHQQFHHSYFHHYHHQYHHYHPRHEPPSRVSNKPSLLPVSGGSRLSPSRIRLCVLVLILLHTVVSFSSSQSGGGLGLETLPALEEGLTQEE.

A helical transmembrane segment spans residues 47-67; the sequence is LASLLFFTVLLADHLWLCAGA. The disordered stretch occupies residues 76–115; sequence SAMRPPWGAGRERQPVPPRAVLPPPPPSPGEPSASSGTCG. A compositionally biased stretch (pro residues) spans 90-105; sequence PVPPRAVLPPPPPSPG. N-linked (GlcNAc...) asparagine glycosylation is present at Asn-120. Disordered regions lie at residues 158 to 178 and 399 to 424; these read EPTT…APEF and HYHP…GGSR. The span at 161–171 shows a compositional bias: pro residues; sequence TPAPPLRPPDS. The helical transmembrane segment at 432–452 threads the bilayer; the sequence is LCVLVLILLHTVVSFSSSQSG.

The protein belongs to the NALF family.

The protein localises to the membrane. Probable component of the NALCN channel complex, a channel that regulates the resting membrane potential and controls neuronal excitability. In Mus musculus (Mouse), this protein is NALCN channel auxiliary factor 2 (Nalf2).